The sequence spans 72 residues: Alpha-elapitoxin-Dpp2a (72 aa).

Cystine bridges form between Cys3–Cys21, Cys14–Cys42, Cys27–Cys31, Cys46–Cys57, and Cys58–Cys63.

The protein belongs to the three-finger toxin family. Long-chain subfamily. Type II alpha-neurotoxin sub-subfamily. Expressed by the venom gland.

The protein localises to the secreted. Binds with high affinity to muscular (alpha-1/CHRNA1) and neuronal (alpha-7/CHRNA7) nicotinic acetylcholine receptor (nAChR) and inhibits acetylcholine from binding to the receptor, thereby impairing neuromuscular and neuronal transmission. The chain is Alpha-elapitoxin-Dpp2a from Dendroaspis polylepis polylepis (Black mamba).